A 483-amino-acid chain; its full sequence is Glutamate--tRNA ligase (483 aa).

Positions Pro11–Asn21 match the 'HIGH' region motif. Positions Lys255–Arg259 match the 'KMSKS' region motif. ATP is bound at residue Lys258.

Belongs to the class-I aminoacyl-tRNA synthetase family. Glutamate--tRNA ligase type 1 subfamily. Monomer.

Its subcellular location is the cytoplasm. It carries out the reaction tRNA(Glu) + L-glutamate + ATP = L-glutamyl-tRNA(Glu) + AMP + diphosphate. In terms of biological role, catalyzes the attachment of glutamate to tRNA(Glu) in a two-step reaction: glutamate is first activated by ATP to form Glu-AMP and then transferred to the acceptor end of tRNA(Glu). This is Glutamate--tRNA ligase from Lactococcus lactis subsp. cremoris (strain SK11).